Reading from the N-terminus, the 139-residue chain is Mitochondrial intermembrane space import and assembly protein 40-A (139 aa).

Disulfide bonds link Cys53-Cys55, Cys64-Cys97, and Cys74-Cys87. In terms of domain architecture, CHCH spans Ser61–Tyr105. 2 consecutive short sequence motifs (cx9C motif) follow at residues Cys64–Cys74 and Cys87–Cys97. The disordered stretch occupies residues Asp103–Ser139. Residues Glu115–Glu124 show a composition bias toward basic and acidic residues.

As to quaternary structure, monomer. Can form homooligomers.

Its subcellular location is the mitochondrion intermembrane space. Its function is as follows. Central component of a redox-sensitive mitochondrial intermembrane space import machinery which is required for the biogenesis of respiratory chain complexes. Functions as chaperone and catalyzes the formation of disulfide bonds in substrate proteins, such as COX17 or MICU1. Required for the import and folding of small cysteine-containing proteins (small Tim) in the mitochondrial intermembrane space (IMS). Precursor proteins to be imported into the IMS are translocated in their reduced form into the mitochondria. This is Mitochondrial intermembrane space import and assembly protein 40-A (chchd4-a) from Xenopus laevis (African clawed frog).